The chain runs to 338 residues: 5-dehydro-2-deoxygluconokinase (338 aa).

The protein belongs to the carbohydrate kinase PfkB family.

It catalyses the reaction 5-dehydro-2-deoxy-D-gluconate + ATP = 6-phospho-5-dehydro-2-deoxy-D-gluconate + ADP + H(+). Its pathway is polyol metabolism; myo-inositol degradation into acetyl-CoA; acetyl-CoA from myo-inositol: step 5/7. Functionally, catalyzes the phosphorylation of 5-dehydro-2-deoxy-D-gluconate (2-deoxy-5-keto-D-gluconate or DKG) to 6-phospho-5-dehydro-2-deoxy-D-gluconate (DKGP). This Clostridium perfringens (strain ATCC 13124 / DSM 756 / JCM 1290 / NCIMB 6125 / NCTC 8237 / Type A) protein is 5-dehydro-2-deoxygluconokinase.